Here is a 217-residue protein sequence, read N- to C-terminus: 3,4-dihydroxy-2-butanone 4-phosphate synthase (217 aa).

Residues 37–38 (RE), D42, 150–154 (RGGHT), and E174 contribute to the D-ribulose 5-phosphate site. Mg(2+) is bound at residue E38. H153 provides a ligand contact to Mg(2+).

Belongs to the DHBP synthase family. As to quaternary structure, homodimer. Mg(2+) serves as cofactor. Mn(2+) is required as a cofactor.

It catalyses the reaction D-ribulose 5-phosphate = (2S)-2-hydroxy-3-oxobutyl phosphate + formate + H(+). The protein operates within cofactor biosynthesis; riboflavin biosynthesis; 2-hydroxy-3-oxobutyl phosphate from D-ribulose 5-phosphate: step 1/1. Functionally, catalyzes the conversion of D-ribulose 5-phosphate to formate and 3,4-dihydroxy-2-butanone 4-phosphate. This chain is 3,4-dihydroxy-2-butanone 4-phosphate synthase, found in Escherichia coli O127:H6 (strain E2348/69 / EPEC).